The sequence spans 104 residues: MSRFDNVAVTKQANVYFDGKCVSHTVEFADGTKKSVGVILPSTLTFNTGAPEVMETVAGACRVKLAGENEWKSYAAGQSFEVPANSSFEIEVAAEPYHYVCHFG.

It belongs to the nucleoside phosphorylase PpnP family.

It carries out the reaction a purine D-ribonucleoside + phosphate = a purine nucleobase + alpha-D-ribose 1-phosphate. The enzyme catalyses adenosine + phosphate = alpha-D-ribose 1-phosphate + adenine. It catalyses the reaction cytidine + phosphate = cytosine + alpha-D-ribose 1-phosphate. The catalysed reaction is guanosine + phosphate = alpha-D-ribose 1-phosphate + guanine. It carries out the reaction inosine + phosphate = alpha-D-ribose 1-phosphate + hypoxanthine. The enzyme catalyses thymidine + phosphate = 2-deoxy-alpha-D-ribose 1-phosphate + thymine. It catalyses the reaction uridine + phosphate = alpha-D-ribose 1-phosphate + uracil. The catalysed reaction is xanthosine + phosphate = alpha-D-ribose 1-phosphate + xanthine. Functionally, catalyzes the phosphorolysis of diverse nucleosides, yielding D-ribose 1-phosphate and the respective free bases. Can use uridine, adenosine, guanosine, cytidine, thymidine, inosine and xanthosine as substrates. Also catalyzes the reverse reactions. The polypeptide is Pyrimidine/purine nucleoside phosphorylase (Thiobacillus denitrificans (strain ATCC 25259 / T1)).